The following is an 84-amino-acid chain: Small ribosomal subunit protein uS17 (84 aa).

It belongs to the universal ribosomal protein uS17 family. Part of the 30S ribosomal subunit.

Its function is as follows. One of the primary rRNA binding proteins, it binds specifically to the 5'-end of 16S ribosomal RNA. The polypeptide is Small ribosomal subunit protein uS17 (Photorhabdus laumondii subsp. laumondii (strain DSM 15139 / CIP 105565 / TT01) (Photorhabdus luminescens subsp. laumondii)).